A 367-amino-acid chain; its full sequence is Glutamate 5-kinase (367 aa).

Lys-10 is an ATP binding site. The substrate site is built by Ser-50, Asp-137, and Asn-149. ATP-binding positions include 169 to 170 (TD) and 211 to 217 (TGGMSTK). The region spanning 275–353 (AGEITVDDGA…QQIAEILGYE (79 aa)) is the PUA domain.

The protein belongs to the glutamate 5-kinase family.

It localises to the cytoplasm. The catalysed reaction is L-glutamate + ATP = L-glutamyl 5-phosphate + ADP. Its pathway is amino-acid biosynthesis; L-proline biosynthesis; L-glutamate 5-semialdehyde from L-glutamate: step 1/2. Its function is as follows. Catalyzes the transfer of a phosphate group to glutamate to form L-glutamate 5-phosphate. The sequence is that of Glutamate 5-kinase from Pectobacterium atrosepticum (strain SCRI 1043 / ATCC BAA-672) (Erwinia carotovora subsp. atroseptica).